The primary structure comprises 200 residues: Peptidyl-tRNA hydrolase (200 aa).

Y15 contacts tRNA. Catalysis depends on H20, which acts as the Proton acceptor. F66, N68, and N114 together coordinate tRNA.

Belongs to the PTH family. As to quaternary structure, monomer.

The protein resides in the cytoplasm. It carries out the reaction an N-acyl-L-alpha-aminoacyl-tRNA + H2O = an N-acyl-L-amino acid + a tRNA + H(+). Its function is as follows. Hydrolyzes ribosome-free peptidyl-tRNAs (with 1 or more amino acids incorporated), which drop off the ribosome during protein synthesis, or as a result of ribosome stalling. Functionally, catalyzes the release of premature peptidyl moieties from peptidyl-tRNA molecules trapped in stalled 50S ribosomal subunits, and thus maintains levels of free tRNAs and 50S ribosomes. This is Peptidyl-tRNA hydrolase from Ralstonia nicotianae (strain ATCC BAA-1114 / GMI1000) (Ralstonia solanacearum).